A 146-amino-acid polypeptide reads, in one-letter code: Large ribosomal subunit protein uL15 (146 aa).

Positions 1 to 61 are disordered; it reads MELNSLKPAA…GGQMPMHRRL (61 aa). Over residues 30–39 the composition is skewed to basic residues; it reads TATKGHKGQK.

This sequence belongs to the universal ribosomal protein uL15 family. Part of the 50S ribosomal subunit.

Functionally, binds to the 23S rRNA. This is Large ribosomal subunit protein uL15 from Geotalea uraniireducens (strain Rf4) (Geobacter uraniireducens).